Here is a 453-residue protein sequence, read N- to C-terminus: tRNA modification GTPase MnmE (453 aa).

Positions 28, 86, and 125 each coordinate (6S)-5-formyl-5,6,7,8-tetrahydrofolate. Positions 221 to 375 (GIKIAIVGEP…LIKYLEETSL (155 aa)) constitute a TrmE-type G domain. Asparagine 231 contributes to the K(+) binding site. GTP-binding positions include 231-236 (NAGKSS), 250-256 (TNIPGTT), and 276-279 (DTAG). Position 235 (serine 235) interacts with Mg(2+). K(+) contacts are provided by threonine 250, isoleucine 252, and threonine 255. Position 256 (threonine 256) interacts with Mg(2+). Residue lysine 453 participates in (6S)-5-formyl-5,6,7,8-tetrahydrofolate binding.

This sequence belongs to the TRAFAC class TrmE-Era-EngA-EngB-Septin-like GTPase superfamily. TrmE GTPase family. In terms of assembly, homodimer. Heterotetramer of two MnmE and two MnmG subunits. Requires K(+) as cofactor.

The protein localises to the cytoplasm. In terms of biological role, exhibits a very high intrinsic GTPase hydrolysis rate. Involved in the addition of a carboxymethylaminomethyl (cmnm) group at the wobble position (U34) of certain tRNAs, forming tRNA-cmnm(5)s(2)U34. The protein is tRNA modification GTPase MnmE of Mycoplasmoides gallisepticum (strain R(low / passage 15 / clone 2)) (Mycoplasma gallisepticum).